The primary structure comprises 378 residues: Anhydro-N-acetylmuramic acid kinase (378 aa).

Gly-9–Asp-16 contacts ATP.

The protein belongs to the anhydro-N-acetylmuramic acid kinase family.

The enzyme catalyses 1,6-anhydro-N-acetyl-beta-muramate + ATP + H2O = N-acetyl-D-muramate 6-phosphate + ADP + H(+). Its pathway is amino-sugar metabolism; 1,6-anhydro-N-acetylmuramate degradation. It participates in cell wall biogenesis; peptidoglycan recycling. Catalyzes the specific phosphorylation of 1,6-anhydro-N-acetylmuramic acid (anhMurNAc) with the simultaneous cleavage of the 1,6-anhydro ring, generating MurNAc-6-P. Is required for the utilization of anhMurNAc either imported from the medium or derived from its own cell wall murein, and thus plays a role in cell wall recycling. This Synechococcus sp. (strain ATCC 27144 / PCC 6301 / SAUG 1402/1) (Anacystis nidulans) protein is Anhydro-N-acetylmuramic acid kinase.